A 315-amino-acid chain; its full sequence is Diacylglycerol kinase (315 aa).

The region spanning 1 to 132 (MRKRARIIYN…VDIGKMNNRY (132 aa)) is the DAGKc domain. Residues 10-14 (NPTSG), Thr41, 67-73 (GDGTLNE), and Thr94 each bind ATP. Mg(2+) contacts are provided by Lys213, Asp216, and Tyr218. Catalysis depends on Glu273, which acts as the Proton acceptor.

The protein belongs to the diacylglycerol/lipid kinase family. As to quaternary structure, homodimer. The cofactor is Mg(2+).

It catalyses the reaction a 1,2-diacyl-sn-glycerol + ATP = a 1,2-diacyl-sn-glycero-3-phosphate + ADP + H(+). Its function is as follows. Catalyzes the phosphorylation of diacylglycerol (DAG) into phosphatidic acid. Is a key enzyme involved in the production of lipoteichoic acid by reintroducing DAG formed from the breakdown of membrane phospholipids into the phosphatidylglycerol biosynthetic pathway. This Staphylococcus aureus (strain bovine RF122 / ET3-1) protein is Diacylglycerol kinase (dagK).